We begin with the raw amino-acid sequence, 286 residues long: Carbohydrate-binding domain-containing protein Cthe_2159 (286 aa).

Residues 1–20 form the signal peptide; the sequence is MSIKKLILAASILTTLALTG. C21 carries the N-palmitoyl cysteine lipid modification. C21 carries S-diacylglycerol cysteine lipidation. The tract at residues 124–225 is polygalacturonic acid-binding; the sequence is GKDNVLTDAE…GIKVENTEEP (102 aa). The Ca(2+) site is built by R152, D153, D154, N177, D178, D215, D243, D244, and D247.

As to quaternary structure, monomer.

The protein resides in the cell membrane. Binds cellulosic and pectic substrates. Displays no enzyme activity (in vitro). The chain is Carbohydrate-binding domain-containing protein Cthe_2159 from Acetivibrio thermocellus (strain ATCC 27405 / DSM 1237 / JCM 9322 / NBRC 103400 / NCIMB 10682 / NRRL B-4536 / VPI 7372) (Clostridium thermocellum).